A 607-amino-acid chain; its full sequence is Pescadillo homolog (607 aa).

Positions 320 to 413 (KLKNLFKGLK…KLLPVNKYLI (94 aa)) constitute a BRCT domain. The segment at 486–607 (EALNSGALEE…KTQRKEILAK (122 aa)) is disordered. Residues 495–511 (EAPEEEDDDEEAPEEDE) are compositionally biased toward acidic residues. The segment covering 530-549 (IFKENPSEQKKLTKQEEALR) has biased composition (basic and acidic residues). Residues 551 to 562 (RMVKSRHKKLYR) show a composition bias toward basic residues. Positions 563–607 (KMLEKQKKQTKEANLLKEKRQQIDKKQRVEQTQKRKTQRKEILAK) are enriched in basic and acidic residues.

Belongs to the pescadillo family.

Its subcellular location is the nucleus. The protein resides in the nucleolus. It localises to the nucleoplasm. Required for maturation of ribosomal RNAs and formation of the large ribosomal subunit. The sequence is that of Pescadillo homolog from Culex quinquefasciatus (Southern house mosquito).